We begin with the raw amino-acid sequence, 391 residues long: Rhizopuspepsin-3 (391 aa).

Positions 1–21 are cleaved as a signal peptide; that stretch reads MKFTLISSCVTLALMTLSIEA. Residues 22 to 68 constitute a propeptide, activation peptide; that stretch reads APSGKKVNIPLTKNKDYKPNAKNAIQKAIAKYHRHRSVSSSNSTSTD. The Peptidase A1 domain maps to 84-388; that stretch reads YYGEVTVGTP…NPEVPHVQIA (305 aa). Asp102 is an active-site residue. The cysteines at positions 115 and 118 are disulfide-linked. Asp285 is a catalytic residue. Cysteines 319 and 352 form a disulfide.

It belongs to the peptidase A1 family.

It carries out the reaction Hydrolysis of proteins with broad specificity similar to that of pepsin A, preferring hydrophobic residues at P1 and P1'. Clots milk and activates trypsinogen. Does not cleave 4-Gln-|-His-5, but does cleave 10-His-|-Leu-11 and 12-Val-|-Glu-13 in B chain of insulin.. This chain is Rhizopuspepsin-3, found in Rhizopus niveus.